Here is a 276-residue protein sequence, read N- to C-terminus: Dermonecrotic toxin LafSicTox-betaIE2 (276 aa).

Residue His-5 is part of the active site. Mg(2+) contacts are provided by Glu-25 and Asp-27. The Nucleophile role is filled by His-41. Cystine bridges form between Cys-45–Cys-51 and Cys-47–Cys-189. Asp-85 provides a ligand contact to Mg(2+).

This sequence belongs to the arthropod phospholipase D family. Class II subfamily. Requires Mg(2+) as cofactor. Expressed by the venom gland.

The protein resides in the secreted. The enzyme catalyses an N-(acyl)-sphingosylphosphocholine = an N-(acyl)-sphingosyl-1,3-cyclic phosphate + choline. It catalyses the reaction an N-(acyl)-sphingosylphosphoethanolamine = an N-(acyl)-sphingosyl-1,3-cyclic phosphate + ethanolamine. The catalysed reaction is a 1-acyl-sn-glycero-3-phosphocholine = a 1-acyl-sn-glycero-2,3-cyclic phosphate + choline. It carries out the reaction a 1-acyl-sn-glycero-3-phosphoethanolamine = a 1-acyl-sn-glycero-2,3-cyclic phosphate + ethanolamine. Its function is as follows. Dermonecrotic toxins cleave the phosphodiester linkage between the phosphate and headgroup of certain phospholipids (sphingolipid and lysolipid substrates), forming an alcohol (often choline) and a cyclic phosphate. This toxin acts on sphingomyelin (SM). It may also act on ceramide phosphoethanolamine (CPE), lysophosphatidylcholine (LPC) and lysophosphatidylethanolamine (LPE), but not on lysophosphatidylserine (LPS), and lysophosphatidylglycerol (LPG). It acts by transphosphatidylation, releasing exclusively cyclic phosphate products as second products. Induces dermonecrosis, hemolysis, increased vascular permeability, edema, inflammatory response, and platelet aggregation. This chain is Dermonecrotic toxin LafSicTox-betaIE2, found in Loxosceles aff. spinulosa (strain GJB-2008) (Recluse spider).